The primary structure comprises 314 residues: uncharacterized protein (314 aa).

Helical transmembrane passes span 23–43 and 98–118; these read LALGPVHPGGPTLIDLLMALF and MASGIGGALSGALGGVMGPLT. The span at 165 to 184 shows a compositional bias: gly residues; that stretch reads GLGSGAGGGDVGGGGAGGTT. Residues 165 to 314 are disordered; the sequence is GLGSGAGGGD…APDEKTDAGE (150 aa). Positions 190–202 are enriched in pro residues; that stretch reads GPPPVPTSSPPTT. 2 stretches are compositionally biased toward low complexity: residues 203 to 212 and 219 to 232; these read PAGAPTKSAT and ASPASAHMGAAGMP. Residues 221–241 form a helical membrane-spanning segment; the sequence is PASAHMGAAGMPMVPPGAMGA. Positions 294–314 are enriched in basic and acidic residues; that stretch reads LLPEHKDFGRIAPDEKTDAGE.

The protein resides in the cell membrane. This is an uncharacterized protein from Mycobacterium tuberculosis (strain ATCC 25618 / H37Rv).